Consider the following 152-residue polypeptide: Regulator of G-protein signaling 21 (152 aa).

The region spanning 21 to 137 is the RGS domain; the sequence is NMDTLLANQA…LKSEIYKKLV (117 aa).

Expressed ubiquitously.

In terms of biological role, inhibits signal transduction by increasing the GTPase activity of G protein alpha subunits thereby driving them into their inactive GDP-bound form. This is Regulator of G-protein signaling 21 (RGS21) from Homo sapiens (Human).